A 404-amino-acid chain; its full sequence is Glucose-1-phosphate adenylyltransferase (404 aa).

Residues tyrosine 99, glycine 164, 179–180 (EK), and serine 197 contribute to the alpha-D-glucose 1-phosphate site.

The protein belongs to the bacterial/plant glucose-1-phosphate adenylyltransferase family.

It carries out the reaction alpha-D-glucose 1-phosphate + ATP + H(+) = ADP-alpha-D-glucose + diphosphate. The protein operates within capsule biogenesis; capsule polysaccharide biosynthesis. Its pathway is glycan biosynthesis; glycogen biosynthesis. Its function is as follows. Involved in the biosynthesis of ADP-glucose, a building block, required in the biosynthesis of maltose-1-phosphate (M1P) and in the elongation reactions to produce linear alpha-1,4-glucans. Catalyzes the reaction between ATP and alpha-D-glucose 1-phosphate (G1P) to produce pyrophosphate and ADP-Glc. This chain is Glucose-1-phosphate adenylyltransferase, found in Mycolicibacterium paratuberculosis (strain ATCC BAA-968 / K-10) (Mycobacterium paratuberculosis).